A 388-amino-acid chain; its full sequence is 4-hydroxy-tetrahydrodipicolinate synthase 1, chloroplastic (388 aa).

The tract at residues 1–51 is disordered; sequence MPYLQPPRPHPHPHPTSRLSRASPPSPFPFFPAGTSRSGRLQPVPVSGHSA. The N-terminal 62 residues, 1–62, are a transit peptide targeting the chloroplast; the sequence is MPYLQPPRPH…RVSKGKFAVA (62 aa). Thr-131 is a binding site for pyruvate. Tyr-217 functions as the Proton donor/acceptor in the catalytic mechanism. The Schiff-base intermediate with substrate role is filled by Lys-245. Ile-284 is a pyruvate binding site.

This sequence belongs to the DapA family. Tetramer of modified subunits derived from two genes in different combinations.

Its subcellular location is the plastid. The protein resides in the chloroplast. It catalyses the reaction L-aspartate 4-semialdehyde + pyruvate = (2S,4S)-4-hydroxy-2,3,4,5-tetrahydrodipicolinate + H2O + H(+). It functions in the pathway amino-acid biosynthesis; L-lysine biosynthesis via DAP pathway; (S)-tetrahydrodipicolinate from L-aspartate: step 3/4. Sensitive to lysine inhibition. This inhibition increase in an allosteric manner with increasing concentration of the inhibitor. Its function is as follows. Catalyzes the condensation of (S)-aspartate-beta-semialdehyde [(S)-ASA] and pyruvate to 4-hydroxy-tetrahydrodipicolinate (HTPA). In Triticum aestivum (Wheat), this protein is 4-hydroxy-tetrahydrodipicolinate synthase 1, chloroplastic.